The primary structure comprises 1143 residues: Serine/threonine-protein kinase BRI1-like 2 (1143 aa).

Positions 1-31 (MTTSPIRVRIRTRIQISFIFLLTHLSQSSSS) are cleaved as a signal peptide. Residues 32 to 756 (DQSSLKTDSL…GTRAASWANS (725 aa)) lie on the Extracellular side of the membrane. The Cys pair 1 motif lies at 68–75 (CQFSGVTC). 24 LRR repeats span residues 77 to 101 (GGRV…AFTS), 102 to 125 (LDSL…LLLL), 126 to 150 (PLTL…FFSK), 151 to 175 (YSNL…LFLS), 177 to 200 (KKLQ…TIPL), 203 to 227 (CVSM…LINC), 228 to 250 (TNLK…SFGE), 251 to 275 (LKLL…IGDT), 277 to 299 (RSLQ…SLSS), 300 to 324 (CSWL…ILRS), 326 to 349 (GSLQ…ISAC), 351 to 373 (SLRI…LCPG), 374 to 398 (AASL…ISQC), 399 to 422 (SELR…IGNL), 424 to 446 (KLEQ…IGKL), 447 to 470 (QNLK…FFNC), 472 to 493 (NIEW…DFGI), 494 to 518 (LSRL…LGKC), 520 to 542 (TLVW…LGRQ), 570 to 594 (VGGL…KSCD), 610 to 634 (YQTI…IGEM), 635 to 660 (IALQ…QLKN), 662 to 681 (GVFD…SFSN), and 682 to 707 (LSFL…QLST). N-linked (GlcNAc...) asparagine glycosylation is found at N84 and N118. 4 N-linked (GlcNAc...) asparagine glycosylation sites follow: N163, N188, N226, and N234. N-linked (GlcNAc...) asparagine glycans are attached at residues N288 and N312. N412 is a glycosylation site (N-linked (GlcNAc...) asparagine). N469 carries an N-linked (GlcNAc...) asparagine glycan. N506 carries N-linked (GlcNAc...) asparagine glycosylation. A glycan (N-linked (GlcNAc...) asparagine) is linked at N681. Residues 720–727 (CGVPLPEC) carry the Cys pair 2 motif. The helical transmembrane segment at 757–777 (IVLGVLISAASVCILIVWAIA) threads the bilayer. The Cytoplasmic segment spans residues 778–1143 (VRARRRDADD…NNSHSHSNSL (366 aa)). At T835 the chain carries Phosphothreonine. Residues 838-1129 (FSAASMIGHG…LQVVASLREL (292 aa)) form the Protein kinase domain. ATP contacts are provided by residues 844–852 (IGHGGFGEV) and K866. A Phosphotyrosine modification is found at Y911. D966 serves as the catalytic Proton acceptor. S1001 bears the Phosphoserine mark. At Y1009 the chain carries Phosphotyrosine.

This sequence belongs to the protein kinase superfamily. Ser/Thr protein kinase family. Interacts with TTL3. As to expression, expressed in provascular and procambial sites throughout plant development. Expressed throughout globe- to heart-staged embryos. Then, it is restricted to procambial cells by the late torpedo stage, and this pattern persists throughout the duration of embryo development. After germination, it is expressed not only in procambial cells throughout the plant but also in all lateral organ primordia before the onset of vascularization.

It is found in the cell membrane. The enzyme catalyses L-seryl-[protein] + ATP = O-phospho-L-seryl-[protein] + ADP + H(+). It carries out the reaction L-threonyl-[protein] + ATP = O-phospho-L-threonyl-[protein] + ADP + H(+). Functionally, receptor with a serine/threonine-protein kinase activity, which may transduce extracellular spatial and temporal signals into downstream cell differentiation responses in provascular and procambial cells. In contrast to BRI1, BRL1 and BRL3, it does not bind brassinolide. This chain is Serine/threonine-protein kinase BRI1-like 2, found in Arabidopsis thaliana (Mouse-ear cress).